Here is a 378-residue protein sequence, read N- to C-terminus: Transmembrane 6 superfamily member 2 (378 aa).

The next 10 helical transmembrane spans lie at 10–30 (TVAMSFCALPVSYLLNQVSAF), 34–54 (LFVVLTSALILGLLFLAVYSL), 63–83 (PLYAVFVIFSFTSVVDLVIAL), 110–130 (IFICYWDGTVHYLLYLTMAGA), 140–160 (LGLYWLGSFAMSILVFLPGNI), 170–190 (PTFFLAILYMLVPCWAGVRIF), 219–239 (LALIVYLIFAALFTVFRGLVV), 269–289 (MLMYLFYALPFYCLAAYALAF), 291–311 (GCSWLPDWALVFAGAIGQAQF), and 332–352 (TWATFFLSNLLLALGPHLLAF). 2 consecutive EXPERA domains span residues 61–186 (YDPL…CWAG) and 217–351 (ADLA…HLLA).

The protein belongs to the TM6SF family. Highly expressed in the liver at both the mRNA and protein levels.

The protein localises to the endoplasmic reticulum membrane. Its subcellular location is the endoplasmic reticulum-Golgi intermediate compartment membrane. In terms of biological role, regulator of liver fat metabolism influencing triglyceride secretion and hepatic lipid droplet content. May function as sterol isomerase. This Mus musculus (Mouse) protein is Transmembrane 6 superfamily member 2 (Tm6sf2).